The chain runs to 385 residues: Lipid-A-disaccharide synthase (385 aa).

The protein belongs to the LpxB family.

It catalyses the reaction 2-N,3-O-bis[(3R)-3-hydroxytetradecanoyl]-alpha-D-glucosaminyl 1-phosphate + UDP-2-N,3-O-bis[(3R)-3-hydroxytetradecanoyl]-alpha-D-glucosamine = lipid A disaccharide (E. coli) + UDP + H(+). It carries out the reaction a lipid X + a UDP-2-N,3-O-bis[(3R)-3-hydroxyacyl]-alpha-D-glucosamine = a lipid A disaccharide + UDP + H(+). The protein operates within glycolipid biosynthesis; lipid IV(A) biosynthesis; lipid IV(A) from (3R)-3-hydroxytetradecanoyl-[acyl-carrier-protein] and UDP-N-acetyl-alpha-D-glucosamine: step 5/6. Condensation of UDP-2,3-diacylglucosamine and 2,3-diacylglucosamine-1-phosphate to form lipid A disaccharide, a precursor of lipid A, a phosphorylated glycolipid that anchors the lipopolysaccharide to the outer membrane of the cell. The polypeptide is Lipid-A-disaccharide synthase (Wigglesworthia glossinidia brevipalpis).